The following is an 843-amino-acid chain: INO80 complex subunit D-B (843 aa).

The segment covering 159–175 (TLNHKQKQQDHSVDTNH) has biased composition (basic and acidic residues). Disordered stretches follow at residues 159-216 (TLNH…PTVR), 221-240 (FKTS…STDN), 503-550 (YHHH…LPQG), 695-726 (SLLH…HLTD), and 791-843 (LSTP…TAAP). Polar residues-rich tracts occupy residues 176–187 (LRTSSLPSTLSH), 197–216 (RATQ…PTVR), and 221–231 (FKTSSSLQDTH). Over residues 503–540 (YHHHQQIQRHRPLKKAKPPALSKKHKKKGKRGTQRRPQ) the composition is skewed to basic residues. Residues 705-717 (PPSPPSPQPPLTP) are compositionally biased toward pro residues. The span at 796–821 (QPSSALSALPQSSQTRSTTTSPTSQT) shows a compositional bias: low complexity.

This sequence belongs to the INO80D family. Component of the chromatin-remodeling INO80 complex.

It localises to the nucleus. Putative regulatory component of the chromatin remodeling INO80 complex which is involved in transcriptional regulation, DNA replication and probably DNA repair. This is INO80 complex subunit D-B (ino80db) from Danio rerio (Zebrafish).